The following is a 618-amino-acid chain: 1-deoxy-D-xylulose-5-phosphate synthase (618 aa).

Thiamine diphosphate-binding positions include His73 and 114 to 116; that span reads GHS. Asp145 provides a ligand contact to Mg(2+). Residues 146-147, Asn174, Tyr284, and Glu364 contribute to the thiamine diphosphate site; that span reads GA. Residue Asn174 coordinates Mg(2+).

It belongs to the transketolase family. DXPS subfamily. As to quaternary structure, homodimer. Requires Mg(2+) as cofactor. Thiamine diphosphate serves as cofactor.

The catalysed reaction is D-glyceraldehyde 3-phosphate + pyruvate + H(+) = 1-deoxy-D-xylulose 5-phosphate + CO2. It functions in the pathway metabolic intermediate biosynthesis; 1-deoxy-D-xylulose 5-phosphate biosynthesis; 1-deoxy-D-xylulose 5-phosphate from D-glyceraldehyde 3-phosphate and pyruvate: step 1/1. Functionally, catalyzes the acyloin condensation reaction between C atoms 2 and 3 of pyruvate and glyceraldehyde 3-phosphate to yield 1-deoxy-D-xylulose-5-phosphate (DXP). The protein is 1-deoxy-D-xylulose-5-phosphate synthase of Clostridium beijerinckii (strain ATCC 51743 / NCIMB 8052) (Clostridium acetobutylicum).